We begin with the raw amino-acid sequence, 553 residues long: CTP synthase (553 aa).

The amidoligase domain stretch occupies residues 1–278 (MVRRTHGNSQ…DAYVVRELGL (278 aa)). Serine 25 lines the CTP pocket. Serine 25 is a UTP binding site. Residues 26–31 (SLGKGL) and aspartate 83 each bind ATP. Aspartate 83 and glutamate 152 together coordinate Mg(2+). CTP is bound by residues 159–161 (DIE), 199–204 (KTKPTQ), and lysine 235. UTP is bound by residues 199-204 (KTKPTQ) and lysine 235. A Glutamine amidotransferase type-1 domain is found at 303–552 (NIAIVGKYID…VKAALDHQAA (250 aa)). Glycine 366 serves as a coordination point for L-glutamine. Cysteine 393 acts as the Nucleophile; for glutamine hydrolysis in catalysis. Residues 394 to 397 (LGLQ), glutamate 417, and arginine 478 each bind L-glutamine. Catalysis depends on residues histidine 525 and glutamate 527.

It belongs to the CTP synthase family. As to quaternary structure, homotetramer.

It carries out the reaction UTP + L-glutamine + ATP + H2O = CTP + L-glutamate + ADP + phosphate + 2 H(+). The catalysed reaction is L-glutamine + H2O = L-glutamate + NH4(+). The enzyme catalyses UTP + NH4(+) + ATP = CTP + ADP + phosphate + 2 H(+). It participates in pyrimidine metabolism; CTP biosynthesis via de novo pathway; CTP from UDP: step 2/2. Allosterically activated by GTP, when glutamine is the substrate; GTP has no effect on the reaction when ammonia is the substrate. The allosteric effector GTP functions by stabilizing the protein conformation that binds the tetrahedral intermediate(s) formed during glutamine hydrolysis. Inhibited by the product CTP, via allosteric rather than competitive inhibition. Its function is as follows. Catalyzes the ATP-dependent amination of UTP to CTP with either L-glutamine or ammonia as the source of nitrogen. Regulates intracellular CTP levels through interactions with the four ribonucleotide triphosphates. The chain is CTP synthase from Bifidobacterium longum (strain NCC 2705).